A 490-amino-acid chain; its full sequence is GTPase Der (490 aa).

EngA-type G domains are found at residues 3–167 (FTLA…DAFE) and 203–378 (LQVA…EVWN). Residues 9–16 (GRPNVGKS), 56–60 (DTAGL), 119–122 (NKAE), 209–216 (GRPNAGKS), 256–260 (DTAGM), and 321–324 (NKWD) contribute to the GTP site. Residues 379 to 465 (RRVPTAALNR…RLTMRSQSDA (87 aa)) form the KH-like domain. Residues 451–490 (PGTPIRLTMRSQSDANPYKNRKKSTPSRLRKHLGKPSLKG) are disordered. Positions 469-484 (KNRKKSTPSRLRKHLG) are enriched in basic residues.

The protein belongs to the TRAFAC class TrmE-Era-EngA-EngB-Septin-like GTPase superfamily. EngA (Der) GTPase family. In terms of assembly, associates with the 50S ribosomal subunit.

GTPase that plays an essential role in the late steps of ribosome biogenesis. This Dinoroseobacter shibae (strain DSM 16493 / NCIMB 14021 / DFL 12) protein is GTPase Der.